A 94-amino-acid polypeptide reads, in one-letter code: Small ribosomal subunit protein uS19 (94 aa).

The protein belongs to the universal ribosomal protein uS19 family.

Its function is as follows. Protein S19 forms a complex with S13 that binds strongly to the 16S ribosomal RNA. The sequence is that of Small ribosomal subunit protein uS19 from Carboxydothermus hydrogenoformans (strain ATCC BAA-161 / DSM 6008 / Z-2901).